The following is a 100-amino-acid chain: Aspartyl/glutamyl-tRNA(Asn/Gln) amidotransferase subunit C (100 aa).

The protein belongs to the GatC family. In terms of assembly, heterotrimer of A, B and C subunits.

It catalyses the reaction L-glutamyl-tRNA(Gln) + L-glutamine + ATP + H2O = L-glutaminyl-tRNA(Gln) + L-glutamate + ADP + phosphate + H(+). The catalysed reaction is L-aspartyl-tRNA(Asn) + L-glutamine + ATP + H2O = L-asparaginyl-tRNA(Asn) + L-glutamate + ADP + phosphate + 2 H(+). Allows the formation of correctly charged Asn-tRNA(Asn) or Gln-tRNA(Gln) through the transamidation of misacylated Asp-tRNA(Asn) or Glu-tRNA(Gln) in organisms which lack either or both of asparaginyl-tRNA or glutaminyl-tRNA synthetases. The reaction takes place in the presence of glutamine and ATP through an activated phospho-Asp-tRNA(Asn) or phospho-Glu-tRNA(Gln). In Erythrobacter litoralis (strain HTCC2594), this protein is Aspartyl/glutamyl-tRNA(Asn/Gln) amidotransferase subunit C.